The sequence spans 312 residues: Pantothenate kinase (312 aa).

Residue 97-104 participates in ATP binding; the sequence is GSVAVGKS.

It belongs to the prokaryotic pantothenate kinase family.

Its subcellular location is the cytoplasm. It catalyses the reaction (R)-pantothenate + ATP = (R)-4'-phosphopantothenate + ADP + H(+). It functions in the pathway cofactor biosynthesis; coenzyme A biosynthesis; CoA from (R)-pantothenate: step 1/5. In Mycobacterium bovis (strain BCG / Pasteur 1173P2), this protein is Pantothenate kinase.